Consider the following 108-residue polypeptide: Putative DNA-directed RNA polymerase subunit 1 inactive homolog (108 aa).

In Acanthamoeba polyphaga (Amoeba), this protein is Putative DNA-directed RNA polymerase subunit 1 inactive homolog.